Consider the following 214-residue polypeptide: Ribosomal RNA small subunit methyltransferase G (214 aa).

Residues Gly73, Leu78, 124-125 (VE), and Arg139 each bind S-adenosyl-L-methionine.

It belongs to the methyltransferase superfamily. RNA methyltransferase RsmG family.

Its subcellular location is the cytoplasm. The enzyme catalyses guanosine(527) in 16S rRNA + S-adenosyl-L-methionine = N(7)-methylguanosine(527) in 16S rRNA + S-adenosyl-L-homocysteine. In terms of biological role, specifically methylates the N7 position of guanine in position 527 of 16S rRNA. This Aeromonas hydrophila subsp. hydrophila (strain ATCC 7966 / DSM 30187 / BCRC 13018 / CCUG 14551 / JCM 1027 / KCTC 2358 / NCIMB 9240 / NCTC 8049) protein is Ribosomal RNA small subunit methyltransferase G.